Here is a 262-residue protein sequence, read N- to C-terminus: Dihydroorotate dehydrogenase B (NAD(+)), electron transfer subunit (262 aa).

Residues 3-104 enclose the FAD-binding FR-type domain; that stretch reads KLQEMMTIVS…MGPLGNGFPV (102 aa). Residues 53–56, 70–72, and 79–80 contribute to the FAD site; these read RPIS, LYR, and GT. Positions 226, 231, 234, and 249 each coordinate [2Fe-2S] cluster.

It belongs to the PyrK family. Heterotetramer of 2 PyrK and 2 PyrD type B subunits. Requires [2Fe-2S] cluster as cofactor. It depends on FAD as a cofactor.

It participates in pyrimidine metabolism; UMP biosynthesis via de novo pathway; orotate from (S)-dihydroorotate (NAD(+) route): step 1/1. Its function is as follows. Responsible for channeling the electrons from the oxidation of dihydroorotate from the FMN redox center in the PyrD type B subunit to the ultimate electron acceptor NAD(+). In Lactococcus lactis subsp. lactis (strain IL1403) (Streptococcus lactis), this protein is Dihydroorotate dehydrogenase B (NAD(+)), electron transfer subunit.